Consider the following 456-residue polypeptide: MPQNTLNTVILAAGKGTRMYSQMPKVLHCIGGKPMVERVIDTAAALNPQNICVVVGHGKEQVLDTVKRDAVWVEQTEQLGTGHAVKTALPHLASEGRTLVLYGDVPLIDVETLETLLEAAGNEVGLLTDVPADPAGLGRIIRDGSGSVTAIVEEKDASATQKTIREINTGILVLPNAKLENWLNSLSSNNAQGEYYLTDLIAKAVADGIKVRPVRVRASHLAAGVNNKRQLAELERIFQTEQAQELLKAGVTLRDPARFDLRGRLKHGQDVVIDVNVVIEGEVELGDNVEIGANCVIKNAKIGANSKIAPFSHLEGCEVGENNRIGPYARLRPQAKLADNVHVGNFVEIKNAAIGKGTKANHLTYIGDAEVGSKTNFGAGTIIANYDGVHKHKTVIGDEVRIGSNCVLVAPVTLGNKVTTGAGSTITRNIEDNKLALARARQTVIEGWMRPEKDKQ.

The pyrophosphorylase stretch occupies residues 1–228; sequence MPQNTLNTVI…SHLAAGVNNK (228 aa). Residues 11–14, lysine 25, glutamine 75, 80–81, 102–104, glycine 138, glutamate 153, asparagine 168, and asparagine 226 each bind UDP-N-acetyl-alpha-D-glucosamine; these read LAAG, GT, and YGD. Aspartate 104 serves as a coordination point for Mg(2+). Position 226 (asparagine 226) interacts with Mg(2+). The interval 229–249 is linker; it reads RQLAELERIFQTEQAQELLKA. Positions 250–456 are N-acetyltransferase; that stretch reads GVTLRDPARF…GWMRPEKDKQ (207 aa). Positions 332 and 350 each coordinate UDP-N-acetyl-alpha-D-glucosamine. The active-site Proton acceptor is the histidine 362. UDP-N-acetyl-alpha-D-glucosamine-binding residues include tyrosine 365 and asparagine 376. Acetyl-CoA contacts are provided by residues alanine 379, 385-386, serine 404, alanine 422, and arginine 439; that span reads NY.

The protein in the N-terminal section; belongs to the N-acetylglucosamine-1-phosphate uridyltransferase family. In the C-terminal section; belongs to the transferase hexapeptide repeat family. In terms of assembly, homotrimer. Mg(2+) serves as cofactor.

The protein resides in the cytoplasm. The enzyme catalyses alpha-D-glucosamine 1-phosphate + acetyl-CoA = N-acetyl-alpha-D-glucosamine 1-phosphate + CoA + H(+). The catalysed reaction is N-acetyl-alpha-D-glucosamine 1-phosphate + UTP + H(+) = UDP-N-acetyl-alpha-D-glucosamine + diphosphate. It functions in the pathway nucleotide-sugar biosynthesis; UDP-N-acetyl-alpha-D-glucosamine biosynthesis; N-acetyl-alpha-D-glucosamine 1-phosphate from alpha-D-glucosamine 6-phosphate (route II): step 2/2. The protein operates within nucleotide-sugar biosynthesis; UDP-N-acetyl-alpha-D-glucosamine biosynthesis; UDP-N-acetyl-alpha-D-glucosamine from N-acetyl-alpha-D-glucosamine 1-phosphate: step 1/1. Its pathway is bacterial outer membrane biogenesis; LPS lipid A biosynthesis. In terms of biological role, catalyzes the last two sequential reactions in the de novo biosynthetic pathway for UDP-N-acetylglucosamine (UDP-GlcNAc). The C-terminal domain catalyzes the transfer of acetyl group from acetyl coenzyme A to glucosamine-1-phosphate (GlcN-1-P) to produce N-acetylglucosamine-1-phosphate (GlcNAc-1-P), which is converted into UDP-GlcNAc by the transfer of uridine 5-monophosphate (from uridine 5-triphosphate), a reaction catalyzed by the N-terminal domain. The polypeptide is Bifunctional protein GlmU (Neisseria gonorrhoeae (strain ATCC 700825 / FA 1090)).